A 299-amino-acid chain; its full sequence is Acetyl-hydrolase (299 aa).

The Involved in the stabilization of the negatively charged intermediate by the formation of the oxyanion hole motif lies at 73–75 (HGG). Catalysis depends on residues Ser-143, Glu-237, and His-267.

The protein belongs to the 'GDXG' lipolytic enzyme family.

The protein operates within secondary metabolite biosynthesis; bialaphos biosynthesis. Its function is as follows. This protein removes the N-acetyl group from bialaphos as one of the final steps of biosynthesis of phosphinothricin tripeptide (PTT), also known as bialaphos (BA), a natural-product antibiotic and potent herbicide. This is Acetyl-hydrolase (bah) from Streptomyces hygroscopicus.